The following is a 252-amino-acid chain: PHD finger protein ALFIN-LIKE 7 (252 aa).

Residues Ala141–Glu193 are disordered. The segment covering Ala149–Gly161 has biased composition (low complexity). Ser176 bears the Phosphoserine mark. Positions Glu184–Glu193 are enriched in acidic residues. The segment at Gly195 to Ser247 adopts a PHD-type zinc-finger fold.

This sequence belongs to the Alfin family. As to quaternary structure, interacts with H3K4me3 and to a lesser extent with H3K4me2. Ubiquitously expressed.

Its subcellular location is the nucleus. Its function is as follows. Histone-binding component that specifically recognizes H3 tails trimethylated on 'Lys-4' (H3K4me3), which mark transcription start sites of virtually all active genes. The sequence is that of PHD finger protein ALFIN-LIKE 7 (AL7) from Arabidopsis thaliana (Mouse-ear cress).